Here is a 220-residue protein sequence, read N- to C-terminus: Guanylate kinase (220 aa).

The Guanylate kinase-like domain occupies 15 to 194 (GLMLVISSPS…ALDAVQSIVK (180 aa)). An ATP-binding site is contributed by 22–29 (SPSGAGKS).

The protein belongs to the guanylate kinase family.

The protein resides in the cytoplasm. It catalyses the reaction GMP + ATP = GDP + ADP. Functionally, essential for recycling GMP and indirectly, cGMP. The sequence is that of Guanylate kinase from Rhizobium johnstonii (strain DSM 114642 / LMG 32736 / 3841) (Rhizobium leguminosarum bv. viciae).